The sequence spans 320 residues: tRNA (guanosine(34)-2'-O)-methyltransferase (320 aa).

Residues Gly-53, Trp-55, Asp-81, Asp-97, and Asp-122 each contribute to the S-adenosyl-L-methionine site. Residue Lys-162 is the Proton acceptor of the active site.

It belongs to the class I-like SAM-binding methyltransferase superfamily. RNA methyltransferase RlmE family. TRM7 subfamily. As to quaternary structure, interacts with CG33172/WDR6.

It is found in the cytoplasm. The enzyme catalyses cytidine(32)/guanosine(34) in tRNA + 2 S-adenosyl-L-methionine = 2'-O-methylcytidine(32)/2'-O-methylguanosine(34) in tRNA + 2 S-adenosyl-L-homocysteine + 2 H(+). In terms of biological role, methylates the 2'-O-ribose of nucleotides at position 34 of the tRNA anticodon loop of substrate tRNAs. May require WDR6 for methylation of the nucleotide at position 34 of the anticodon loop of substrate tRNAs. Plays a role in neurogenesis. Requisite for RNA-mediated gene silencing. Modifies position 34 in tRNA(Leu(CAA)), tRNA(Leu(CAG)), tRNA(Phe(GAA)), and tRNA(Trp(CCA)). This Drosophila melanogaster (Fruit fly) protein is tRNA (guanosine(34)-2'-O)-methyltransferase.